Consider the following 285-residue polypeptide: 1,4-dihydroxy-2-naphthoyl-CoA synthase (285 aa).

Residues R45, 84 to 88, Y97, 129 to 133, T155, S161, Y258, and K273 each bind substrate; these read AGGDQ and YSIGG. Residue 154 to 156 participates in hydrogencarbonate binding; sequence QTG.

This sequence belongs to the enoyl-CoA hydratase/isomerase family. MenB subfamily. Homohexamer. Hydrogencarbonate serves as cofactor.

It carries out the reaction 2-succinylbenzoyl-CoA + H(+) = 1,4-dihydroxy-2-naphthoyl-CoA + H2O. Its pathway is quinol/quinone metabolism; 1,4-dihydroxy-2-naphthoate biosynthesis; 1,4-dihydroxy-2-naphthoate from chorismate: step 6/7. The protein operates within quinol/quinone metabolism; menaquinone biosynthesis. Its function is as follows. Converts o-succinylbenzoyl-CoA (OSB-CoA) to 1,4-dihydroxy-2-naphthoyl-CoA (DHNA-CoA). The chain is 1,4-dihydroxy-2-naphthoyl-CoA synthase from Salmonella typhimurium (strain LT2 / SGSC1412 / ATCC 700720).